A 212-amino-acid chain; its full sequence is Thymidylate kinase (212 aa).

An ATP-binding site is contributed by 13–20; sequence GLEGAGKS.

This sequence belongs to the thymidylate kinase family.

It carries out the reaction dTMP + ATP = dTDP + ADP. Its function is as follows. Phosphorylation of dTMP to form dTDP in both de novo and salvage pathways of dTTP synthesis. This Legionella pneumophila (strain Paris) protein is Thymidylate kinase.